A 63-amino-acid chain; its full sequence is Large ribosomal subunit protein bL28 (63 aa).

It belongs to the bacterial ribosomal protein bL28 family.

This Clostridium kluyveri (strain NBRC 12016) protein is Large ribosomal subunit protein bL28.